The sequence spans 183 residues: uncharacterized protein (183 aa).

The 182-residue stretch at methionine 1–glycine 182 folds into the Macro domain.

This is an uncharacterized protein from Pyrococcus furiosus (strain ATCC 43587 / DSM 3638 / JCM 8422 / Vc1).